A 428-amino-acid polypeptide reads, in one-letter code: UPF0229 protein YeaH (428 aa).

A compositionally biased stretch (basic and acidic residues) spans 77–90; the sequence is PGNDHFIQNDRIER. The segment at 77 to 111 is disordered; it reads PGNDHFIQNDRIERPQSGGGGGSGSGQGQASQDGE. Residues 93 to 103 show a composition bias toward gly residues; the sequence is SGGGGGSGSGQ.

Belongs to the UPF0229 family.

The protein is UPF0229 protein YeaH of Salmonella typhi.